Reading from the N-terminus, the 684-residue chain is TBC1 domain family member 23 (684 aa).

Residues 44 to 225 (PLPAELRAKV…AIWDGYLQQA (182 aa)) enclose the Rab-GAP TBC domain. The residue at position 300 (Ser-300) is a Phosphoserine. In terms of domain architecture, Rhodanese spans 334–446 (EGVRFFVVDC…LQQHLADINV (113 aa)). Ser-469, Ser-474, and Ser-507 each carry phosphoserine. At Thr-514 the chain carries Phosphothreonine. The tract at residues 514 to 558 (TPVDRHVSSSDRVGKPYRGVKPVFSIGDEEEYDTDEIDSSSMSDD) is may mediate the interaction with C17orf75, FAM91A1 and WDR11. A may mediate the interaction with WASHC1 region spans residues 514 to 684 (TPVDRHVSSS…IMKVLDALES (171 aa)). Residue Ser-556 is modified to Phosphoserine. The tract at residues 559–684 (DRKEVVNIQT…IMKVLDALES (126 aa)) is may mediate the interaction with FKBP15 and WASHC2; required for endosome to Golgi trafficking.

In terms of assembly, directly interacts with GOLGA1 and GOLGA4. Interacts with FAM91A1, C17ORF75 and WDR11; the interaction recruits TBC1D23 to AP-1-derived vesicles. Directly interacts with WASHC1 and WASHC2/FAM21. Interacts with FKBP15.

It localises to the golgi apparatus. It is found in the trans-Golgi network. The protein resides in the cytoplasmic vesicle. Putative Rab GTPase-activating protein which plays a role in vesicular trafficking. Involved in endosome-to-Golgi trafficking. Acts as a bridging protein by binding simultaneously to golgins, including GOLGA1 and GOLGA4, located at the trans-Golgi, and to the WASH complex, located on endosome-derived vesicles. Together with WDR11 complex facilitates the golgin-mediated capture of vesicles generated using AP-1. Plays a role in brain development, including in cortical neuron positioning. May also be important for neurite outgrowth, possibly through its involvement in membrane trafficking and cargo delivery, 2 processes which are essential for axonal and dendritic growth. May act as a general inhibitor of innate immunity signaling, strongly inhibiting multiple TLR and dectin/CLEC7A-signaling pathways. Does not alter initial activation events, but instead affects maintenance of inflammatory gene expression several hours after bacterial lipopolysaccharide (LPS) challenge. The polypeptide is TBC1 domain family member 23 (Tbc1d23) (Mus musculus (Mouse)).